The primary structure comprises 94 residues: UPF0213 protein BH0048 (94 aa).

In terms of domain architecture, GIY-YIG spans 1–76; the sequence is MNHYVYILEC…KHLSRRKKEQ (76 aa).

It belongs to the UPF0213 family.

The sequence is that of UPF0213 protein BH0048 from Halalkalibacterium halodurans (strain ATCC BAA-125 / DSM 18197 / FERM 7344 / JCM 9153 / C-125) (Bacillus halodurans).